The chain runs to 343 residues: Cyclin-Y-like protein 1 (343 aa).

The segment at 1-48 is disordered; the sequence is MGNTVTCCVSPDASPKAGRDRAVTERGEPYQAQVELQETDPGPHLQHI. The segment covering 17–28 has biased composition (basic and acidic residues); the sequence is AGRDRAVTERGE. The Cyclin N-terminal domain maps to 145 to 267; it reads EIFDEKLHPL…FLELLQFNIN (123 aa).

This sequence belongs to the cyclin family. Cyclin Y subfamily.

It is found in the cell membrane. In terms of biological role, key regulator of Wnt signaling implicated in various biological processes, such as embryonic neurogenesis. The sequence is that of Cyclin-Y-like protein 1 (ccnyl1) from Xenopus tropicalis (Western clawed frog).